Consider the following 449-residue polypeptide: GTPase Der (449 aa).

EngA-type G domains follow at residues 4–169 (PIVA…PAGE) and 177–353 (IQVA…EQHR). Residues 10–17 (GRPNVGKS), 57–61 (DTGGL), 120–123 (NKCE), 183–190 (GRPNVGKS), 230–234 (DTAGI), and 295–298 (NKWD) each bind GTP. Positions 354–439 (RRVTTAVVND…PIRLLWRSKK (86 aa)) constitute a KH-like domain.

This sequence belongs to the TRAFAC class TrmE-Era-EngA-EngB-Septin-like GTPase superfamily. EngA (Der) GTPase family. In terms of assembly, associates with the 50S ribosomal subunit.

GTPase that plays an essential role in the late steps of ribosome biogenesis. The sequence is that of GTPase Der from Thermosynechococcus vestitus (strain NIES-2133 / IAM M-273 / BP-1).